The primary structure comprises 467 residues: 2-succinylbenzoate--CoA ligase (467 aa).

Belongs to the ATP-dependent AMP-binding enzyme family. MenE subfamily.

It catalyses the reaction 2-succinylbenzoate + ATP + CoA = 2-succinylbenzoyl-CoA + AMP + diphosphate. The protein operates within quinol/quinone metabolism; 1,4-dihydroxy-2-naphthoate biosynthesis; 1,4-dihydroxy-2-naphthoate from chorismate: step 5/7. It participates in quinol/quinone metabolism; menaquinone biosynthesis. In terms of biological role, converts 2-succinylbenzoate (OSB) to 2-succinylbenzoyl-CoA (OSB-CoA). The polypeptide is 2-succinylbenzoate--CoA ligase (Listeria innocua serovar 6a (strain ATCC BAA-680 / CLIP 11262)).